The chain runs to 288 residues: MDKIIKSISKNGHFRAFALDSTLTVREAQERHQTWPTSTVALGRTLIAAQVLGANEKGDTKITVKVLGDGAMGPIIAVADSKGHVKGYVKNRELDYKKASTGEVLVAPFVGNGFLVVVKDMGLKQPYSGQVDLITGEIGEDLAWYFLSSEQTPSSVGVNVLLNEDSDTVKIAGGFMLQALPDATDEEITEIEHNIKSMPSIATMLTSDEPLKTMLDNIYGDMEYKNLGEFPLAFKCDCSKERFLEGIKSLGREPIEEMIAEDHGAEIICQFCENKYEYSEEELKALIN.

2 cysteine pairs are disulfide-bonded: C236/C238 and C269/C272.

This sequence belongs to the HSP33 family. Under oxidizing conditions two disulfide bonds are formed involving the reactive cysteines. Under reducing conditions zinc is bound to the reactive cysteines and the protein is inactive.

The protein resides in the cytoplasm. Functionally, redox regulated molecular chaperone. Protects both thermally unfolding and oxidatively damaged proteins from irreversible aggregation. Plays an important role in the bacterial defense system toward oxidative stress. The sequence is that of 33 kDa chaperonin from Lactococcus lactis subsp. cremoris (strain SK11).